Reading from the N-terminus, the 713-residue chain is Nuclear poly(A) polymerase 1 (713 aa).

ATP is bound by residues 91 to 93 (FGS), 103 to 106 (ADID), Asp-159, Tyr-229, and 238 to 239 (GI). Residues Asp-104, Asp-106, and Asp-159 each coordinate Mg(2+). Positions 480–555 (FVFPGGVRPS…TLTDQPRNSK (76 aa)) are disordered. Positions 507–526 (SSTSSAPAATTTTTEMSSES) are enriched in low complexity.

Belongs to the poly(A) polymerase family. Monomer. Forms a complex with cleavage and polyadenylation specificity factor (CPSF) subunit PAPS4. Mg(2+) is required as a cofactor. Mn(2+) serves as cofactor. In terms of tissue distribution, expressed in stems, cotyledons, hypocotyls, radicle, leaves, and, to a lower extent, in roots (including primary and secondary roots as well as root tips) and flowers. In radicle, roots and leaves, mainly present in vascular tissues.

The protein resides in the nucleus. It catalyses the reaction RNA(n) + ATP = RNA(n)-3'-adenine ribonucleotide + diphosphate. Essential protein. Polymerase that creates the 3'-poly(A) tail of mRNA's. Also required for the endoribonucleolytic cleavage reaction at some polyadenylation sites. May acquire specificity through interaction with a cleavage and polyadenylation specificity factor (CPSF) at its C-terminus. This is Nuclear poly(A) polymerase 1 from Arabidopsis thaliana (Mouse-ear cress).